The primary structure comprises 662 residues: MTNLEKMREKLQDQINYHNVLYHQKNKPEISDAEYDELKKKLAEIEPEIYATQDSVGAPPDERFSKVEHQEPMLSLENAYDEQGVEKFLSKIKRFLIEDKIEILCEPKIDGLSFSAIYEDGRFVKAATRGDGFVGEDVTHNVATIKGFPKFLQGVQGRLEVRGEIYISNSDFLKLNENDEFANPRNAAAGSLKQLDANITASRPLRYFAYSLIGGAEKSQSEVLNKLEALGFCVNEHQSLTSSLDGMLKFYNEVYNCRYNLDYDIDGIVYKVNDLVLQNRLGNTHKAPRSALAYKFSAVYAKTKLNKIFIQVGRTGVLTPVADLVPVNVGGVLVSRASLHNQDEIKRKDIREGDIVTIKRAGDVIPQIVEVSRDSRLPNTPEFVFPEVCPECGSKVRQVEGEAAVRCPEEFACKAQMIEKLKHFVSKDAFDIVGLGDKQIEFFYDLGLIKQIHDIFTLEERLDEFNLEEQSGWGEKSIANLLNSIQSRRVITLDRFIFSLGIRFIGQVAAELLADYYVSYNNWYNSMIELSLDNTELVGIDGIGKKGAESLESFFSKEHNIKMLNDLTACLQILPVSSNSSNSVLNNKIIVFTGKLLAMSRGEAKVRAKTLGAKVSSHLSAKTDYLIAGEKPGSKYKKAVELGVEILDEDQWHKVISLGVFK.

NAD(+) is bound by residues 32-36, 75-76, and Glu106; these read DAEYD and SL. Lys108 (N6-AMP-lysine intermediate) is an active-site residue. NAD(+) contacts are provided by Arg129, Glu164, Lys271, and Lys295. 4 residues coordinate Zn(2+): Cys389, Cys392, Cys407, and Cys413. Positions 580–662 constitute a BRCT domain; that stretch reads SSNSVLNNKI…HKVISLGVFK (83 aa).

This sequence belongs to the NAD-dependent DNA ligase family. LigA subfamily. Mg(2+) is required as a cofactor. Requires Mn(2+) as cofactor.

It catalyses the reaction NAD(+) + (deoxyribonucleotide)n-3'-hydroxyl + 5'-phospho-(deoxyribonucleotide)m = (deoxyribonucleotide)n+m + AMP + beta-nicotinamide D-nucleotide.. Its function is as follows. DNA ligase that catalyzes the formation of phosphodiester linkages between 5'-phosphoryl and 3'-hydroxyl groups in double-stranded DNA using NAD as a coenzyme and as the energy source for the reaction. It is essential for DNA replication and repair of damaged DNA. This chain is DNA ligase, found in Wolbachia pipientis wMel.